The sequence spans 98 residues: uncharacterized protein (98 aa).

2 consecutive transmembrane segments (helical) span residues 13–33 (LFSL…IAIF) and 65–85 (IMVI…IFIS).

Its subcellular location is the membrane. This is an uncharacterized protein from Saccharomyces cerevisiae (strain ATCC 204508 / S288c) (Baker's yeast).